Consider the following 488-residue polypeptide: Peptidoglycan endopeptidase LytF (488 aa).

The signal sequence occupies residues 1–26 (MKKKLAAGLTASAIVGTTLVVTPAEA). LysM domains lie at 27 to 70 (ATIK…TLTI) and 92 to 135 (SVYT…KLKV). Disordered stretches follow at residues 70-93 (IPGS…GSSV), 137-176 (GTVS…TGTY), and 218-239 (KSSG…TSAT). Composition is skewed to low complexity over residues 72–93 (GSKS…GSSV) and 140–172 (SSSS…SSSS). One can recognise a LysM 3 domain in the interval 174 to 217 (GTYKVQLGDSLWKIANKVNMSIAELKVLNNLKSDTIYVNQVLKT). The 44-residue stretch at 240–283 (TKYTVKSGDSLWKIANNYNLTVQQIRNINNLKSDVLYVGQVLKL) folds into the LysM 4 domain. Residues 286 to 306 (KASSGSSSSSSSSSNASSGTT) are disordered. The region spanning 307–350 (TTYTVKSGDSLWVIAQKFNVTAQQIREKNNLKTDVLQVGQKLVI) is the LysM 5 domain. The 119-residue stretch at 370-488 (SAKINTMISA…QRYLGAKRYF (119 aa)) folds into the NlpC/P60 domain. C400 acts as the Nucleophile in catalysis. Residue H449 is the Proton acceptor of the active site. The active site involves N461.

The protein belongs to the peptidase C40 family.

The protein localises to the secreted. It localises to the cell wall. With respect to regulation, is inhibited in vitro by para-hydroxymercuribenzoate, a sulfydryl inhibitor. Cell wall hydrolase that cleaves gamma-D-glutamate-meso-diaminopimelate bonds in peptidoglycan. LytF is necessary and sufficient for vegetative daughter cell separation, and also seems to play a role in cell autolysis. This is Peptidoglycan endopeptidase LytF (lytF) from Bacillus subtilis (strain 168).